We begin with the raw amino-acid sequence, 357 residues long: RNA 3'-terminal phosphate cyclase (357 aa).

ATP is bound by residues glutamine 102 and 293–296 (HMGD). The active-site Tele-AMP-histidine intermediate is the histidine 319.

The protein belongs to the RNA 3'-terminal cyclase family. Type 1 subfamily.

It is found in the cytoplasm. It carries out the reaction a 3'-end 3'-phospho-ribonucleotide-RNA + ATP = a 3'-end 2',3'-cyclophospho-ribonucleotide-RNA + AMP + diphosphate. Catalyzes the conversion of 3'-phosphate to a 2',3'-cyclic phosphodiester at the end of RNA. The mechanism of action of the enzyme occurs in 3 steps: (A) adenylation of the enzyme by ATP; (B) transfer of adenylate to an RNA-N3'P to produce RNA-N3'PP5'A; (C) and attack of the adjacent 2'-hydroxyl on the 3'-phosphorus in the diester linkage to produce the cyclic end product. The biological role of this enzyme is unknown but it is likely to function in some aspects of cellular RNA processing. This Desulfurococcus amylolyticus (strain DSM 18924 / JCM 16383 / VKM B-2413 / 1221n) (Desulfurococcus kamchatkensis) protein is RNA 3'-terminal phosphate cyclase.